Here is a 352-residue protein sequence, read N- to C-terminus: Uroporphyrinogen decarboxylase (352 aa).

Substrate contacts are provided by residues 26–30 (RQAGR), Asp-76, Tyr-153, Ser-208, and His-323.

It belongs to the uroporphyrinogen decarboxylase family. As to quaternary structure, homodimer.

The protein localises to the cytoplasm. It catalyses the reaction uroporphyrinogen III + 4 H(+) = coproporphyrinogen III + 4 CO2. It participates in porphyrin-containing compound metabolism; protoporphyrin-IX biosynthesis; coproporphyrinogen-III from 5-aminolevulinate: step 4/4. Catalyzes the decarboxylation of four acetate groups of uroporphyrinogen-III to yield coproporphyrinogen-III. The polypeptide is Uroporphyrinogen decarboxylase (Synechococcus sp. (strain CC9902)).